The sequence spans 93 residues: Alpha-defensin 16 (93 aa).

The N-terminal stretch at Met1 to Ala19 is a signal peptide. The propeptide occupies Asp20–Ser58. Residues Ile22 to Leu54 form a disordered region. Intrachain disulfides connect Cys64–Cys92, Cys66–Cys81, and Cys71–Cys91.

Belongs to the alpha-defensin family. Paneth cells of the small bowel.

The protein resides in the secreted. In terms of biological role, probably contributes to the antimicrobial barrier function of the small bowel mucosa. This is Alpha-defensin 16 (Defa16) from Mus musculus (Mouse).